A 371-amino-acid polypeptide reads, in one-letter code: Barbiturase 2 (371 aa).

Positions 1-104 (MTRPIEVRKV…TIFAYAPEGR (104 aa)) are RU A. Residues Arg53 and 83-84 (SG) each bind substrate. The interval 112–247 (RVTVGYAMSE…AQIVVVGNAR (136 aa)) is RU B. Lys162 is an active-site residue. Substrate is bound by residues Asn194 and 230–231 (SS). Ser230 serves as the catalytic Nucleophile. Residues 253 to 371 (FRVGHSIMKD…PVIAIVDLEA (119 aa)) form an RU C region. Glu303 contributes to the Mg(2+) binding site. Residues Lys330 and 349-350 (SV) contribute to the substrate site. 5 residues coordinate Mg(2+): Ala352, Gln355, Gly356, Pro357, and Gly360.

This sequence belongs to the cyclic amide hydrolase (CyAH) family. Homotetramer.

It carries out the reaction barbiturate + H2O = 3-oxo-3-ureidopropanoate. Its pathway is pyrimidine metabolism; uracil degradation via oxidative pathway; malonate and urea from uracil: step 2/3. Its function is as follows. Responsible for the hydrolysis of barbituric acid (2,4,6-trihydroxy-1,3-pyrimidine), an intermediate in the oxidative catabolism of pyrimidines. Catalyzes the hydrolytic opening of the pyrimidine ring of barbituric acid to yield ureidomalonic acid. Can also use cyanuric acid as a substrate, albeit with lower efficiency. In Nocardioides sp. (strain ATCC BAA-499 / JS614), this protein is Barbiturase 2.